We begin with the raw amino-acid sequence, 604 residues long: Aspartate--tRNA(Asp/Asn) ligase (604 aa).

E168 is an L-aspartate binding site. Residues Q192–K195 form an aspartate region. R214 is an L-aspartate binding site. Residues R214–E216 and Q223 contribute to the ATP site. H446 is an L-aspartate binding site. E480 contributes to the ATP binding site. L-aspartate is bound at residue R487. Position 532 to 535 (G532 to R535) interacts with ATP. The interval L575–T604 is disordered. The segment covering A577–A587 has biased composition (basic and acidic residues). Residues R588–T604 are compositionally biased toward low complexity.

Belongs to the class-II aminoacyl-tRNA synthetase family. Type 1 subfamily. As to quaternary structure, homodimer.

It localises to the cytoplasm. It carries out the reaction tRNA(Asx) + L-aspartate + ATP = L-aspartyl-tRNA(Asx) + AMP + diphosphate. Functionally, aspartyl-tRNA synthetase with relaxed tRNA specificity since it is able to aspartylate not only its cognate tRNA(Asp) but also tRNA(Asn). Reaction proceeds in two steps: L-aspartate is first activated by ATP to form Asp-AMP and then transferred to the acceptor end of tRNA(Asp/Asn). This is Aspartate--tRNA(Asp/Asn) ligase from Salinispora arenicola (strain CNS-205).